The chain runs to 369 residues: Anhydro-N-acetylmuramic acid kinase (369 aa).

12 to 19 (GTSMDGVD) contacts ATP.

It belongs to the anhydro-N-acetylmuramic acid kinase family.

It carries out the reaction 1,6-anhydro-N-acetyl-beta-muramate + ATP + H2O = N-acetyl-D-muramate 6-phosphate + ADP + H(+). Its pathway is amino-sugar metabolism; 1,6-anhydro-N-acetylmuramate degradation. The protein operates within cell wall biogenesis; peptidoglycan recycling. In terms of biological role, catalyzes the specific phosphorylation of 1,6-anhydro-N-acetylmuramic acid (anhMurNAc) with the simultaneous cleavage of the 1,6-anhydro ring, generating MurNAc-6-P. Is required for the utilization of anhMurNAc either imported from the medium or derived from its own cell wall murein, and thus plays a role in cell wall recycling. This is Anhydro-N-acetylmuramic acid kinase from Shewanella halifaxensis (strain HAW-EB4).